A 300-amino-acid polypeptide reads, in one-letter code: Phosphatidylserine decarboxylase proenzyme (300 aa).

Catalysis depends on charge relay system; for autoendoproteolytic cleavage activity residues D117, H173, and S260. The Schiff-base intermediate with substrate; via pyruvic acid; for decarboxylase activity role is filled by S260. Position 260 is a pyruvic acid (Ser); by autocatalysis (S260).

This sequence belongs to the phosphatidylserine decarboxylase family. PSD-B subfamily. Prokaryotic type II sub-subfamily. Heterodimer of a large membrane-associated beta subunit and a small pyruvoyl-containing alpha subunit. The cofactor is pyruvate. In terms of processing, is synthesized initially as an inactive proenzyme. Formation of the active enzyme involves a self-maturation process in which the active site pyruvoyl group is generated from an internal serine residue via an autocatalytic post-translational modification. Two non-identical subunits are generated from the proenzyme in this reaction, and the pyruvate is formed at the N-terminus of the alpha chain, which is derived from the carboxyl end of the proenzyme. The autoendoproteolytic cleavage occurs by a canonical serine protease mechanism, in which the side chain hydroxyl group of the serine supplies its oxygen atom to form the C-terminus of the beta chain, while the remainder of the serine residue undergoes an oxidative deamination to produce ammonia and the pyruvoyl prosthetic group on the alpha chain. During this reaction, the Ser that is part of the protease active site of the proenzyme becomes the pyruvoyl prosthetic group, which constitutes an essential element of the active site of the mature decarboxylase.

Its subcellular location is the cell membrane. The enzyme catalyses a 1,2-diacyl-sn-glycero-3-phospho-L-serine + H(+) = a 1,2-diacyl-sn-glycero-3-phosphoethanolamine + CO2. It functions in the pathway phospholipid metabolism; phosphatidylethanolamine biosynthesis; phosphatidylethanolamine from CDP-diacylglycerol: step 2/2. Functionally, catalyzes the formation of phosphatidylethanolamine (PtdEtn) from phosphatidylserine (PtdSer). This chain is Phosphatidylserine decarboxylase proenzyme, found in Fusobacterium nucleatum subsp. nucleatum (strain ATCC 25586 / DSM 15643 / BCRC 10681 / CIP 101130 / JCM 8532 / KCTC 2640 / LMG 13131 / VPI 4355).